The primary structure comprises 116 residues: Flagellar transcriptional regulator FlhD (116 aa).

Belongs to the FlhD family. In terms of assembly, homodimer; disulfide-linked. Forms a heterohexamer composed of two FlhC and four FlhD subunits. Each FlhC binds a FlhD dimer, forming a heterotrimer, and a hexamer assembles by dimerization of two heterotrimers.

The protein localises to the cytoplasm. In terms of biological role, functions in complex with FlhC as a master transcriptional regulator that regulates transcription of several flagellar and non-flagellar operons by binding to their promoter region. Activates expression of class 2 flagellar genes, including fliA, which is a flagellum-specific sigma factor that turns on the class 3 genes. Also regulates genes whose products function in a variety of physiological pathways. The protein is Flagellar transcriptional regulator FlhD of Escherichia coli O157:H7.